Reading from the N-terminus, the 71-residue chain is Large ribosomal subunit protein uL29 (71 aa).

This sequence belongs to the universal ribosomal protein uL29 family.

The chain is Large ribosomal subunit protein uL29 from Rickettsia canadensis (strain McKiel).